A 262-amino-acid polypeptide reads, in one-letter code: 3-methyl-2-oxobutanoate hydroxymethyltransferase (262 aa).

Mg(2+) contacts are provided by D44 and D83. Residues 44–45 (DS), D83, and K113 each bind 3-methyl-2-oxobutanoate. E115 is a Mg(2+) binding site. E182 serves as the catalytic Proton acceptor.

This sequence belongs to the PanB family. Homodecamer; pentamer of dimers. Requires Mg(2+) as cofactor.

It localises to the cytoplasm. The catalysed reaction is 3-methyl-2-oxobutanoate + (6R)-5,10-methylene-5,6,7,8-tetrahydrofolate + H2O = 2-dehydropantoate + (6S)-5,6,7,8-tetrahydrofolate. It participates in cofactor biosynthesis; (R)-pantothenate biosynthesis; (R)-pantoate from 3-methyl-2-oxobutanoate: step 1/2. Functionally, catalyzes the reversible reaction in which hydroxymethyl group from 5,10-methylenetetrahydrofolate is transferred onto alpha-ketoisovalerate to form ketopantoate. The protein is 3-methyl-2-oxobutanoate hydroxymethyltransferase of Picosynechococcus sp. (strain ATCC 27264 / PCC 7002 / PR-6) (Agmenellum quadruplicatum).